The primary structure comprises 345 residues: Eukaryotic translation initiation factor 3 subunit F (345 aa).

An MPN domain is found at 30–166 (VVIQPQALFS…TRAYISAPVG (137 aa)). A disordered region spans residues 308-345 (GGESGSTESGQRGGQRGGKGGRGGQQRNQERSGEEVRA). Gly residues predominate over residues 318–331 (QRGGQRGGKGGRGG). Residues 335-345 (NQERSGEEVRA) show a composition bias toward basic and acidic residues.

It belongs to the eIF-3 subunit F family. Component of the eukaryotic translation initiation factor 3 (eIF-3) complex.

The protein resides in the cytoplasm. Functionally, component of the eukaryotic translation initiation factor 3 (eIF-3) complex, which is involved in protein synthesis of a specialized repertoire of mRNAs and, together with other initiation factors, stimulates binding of mRNA and methionyl-tRNAi to the 40S ribosome. The eIF-3 complex specifically targets and initiates translation of a subset of mRNAs involved in cell proliferation. This chain is Eukaryotic translation initiation factor 3 subunit F, found in Aspergillus terreus (strain NIH 2624 / FGSC A1156).